A 514-amino-acid chain; its full sequence is Embryonic protein UVS.2 (514 aa).

Positions 1–19 are cleaved as a signal peptide; that stretch reads MDVKISAILLACIIQYAVS. A Peptidase M12A domain is found at 90-286; sequence SAINDARFLW…SKINKLYECN (197 aa). The N-linked (GlcNAc...) asparagine glycan is linked to N112. 6 disulfide bridges follow: C137–C285, C158–C178, C288–C314, C340–C363, C402–C428, and C455–C475. Residue H186 coordinates Zn(2+). The active site involves E187. The Zn(2+) site is built by H190 and H196. N-linked (GlcNAc...) asparagine glycosylation occurs at N199. CUB domains are found at residues 288–400 and 402–513; these read CSNL…YGSI and CGGA…YTFV. N421, N427, and N464 each carry an N-linked (GlcNAc...) asparagine glycan.

Requires Zn(2+) as cofactor.

This Xenopus laevis (African clawed frog) protein is Embryonic protein UVS.2.